Reading from the N-terminus, the 232-residue chain is Orotidine 5'-phosphate decarboxylase (232 aa).

Substrate is bound by residues D10, K32, 59-68, T119, R180, Q189, G209, and R210; that span reads DLKFHDIPNT. K61 functions as the Proton donor in the catalytic mechanism.

Belongs to the OMP decarboxylase family. Type 1 subfamily. Homodimer.

The catalysed reaction is orotidine 5'-phosphate + H(+) = UMP + CO2. Its pathway is pyrimidine metabolism; UMP biosynthesis via de novo pathway; UMP from orotate: step 2/2. Catalyzes the decarboxylation of orotidine 5'-monophosphate (OMP) to uridine 5'-monophosphate (UMP). The chain is Orotidine 5'-phosphate decarboxylase from Actinobacillus succinogenes (strain ATCC 55618 / DSM 22257 / CCUG 43843 / 130Z).